Here is a 644-residue protein sequence, read N- to C-terminus: Translation factor guf1, mitochondrial (644 aa).

Residues 1-31 (MTLRRFSYTFQARILRGLQARPVFVLPSRSH) constitute a mitochondrion transit peptide. The region spanning 51–232 (VNIRNWAIIS…AIIQRVPHPI (182 aa)) is the tr-type G domain. GTP contacts are provided by residues 60-67 (SHIDHGKS), 125-129 (DTPGH), and 179-182 (NKID).

The protein belongs to the TRAFAC class translation factor GTPase superfamily. Classic translation factor GTPase family. LepA subfamily.

It localises to the mitochondrion inner membrane. The catalysed reaction is GTP + H2O = GDP + phosphate + H(+). Its function is as follows. Promotes mitochondrial protein synthesis. May act as a fidelity factor of the translation reaction, by catalyzing a one-codon backward translocation of tRNAs on improperly translocated ribosomes. Binds to mitochondrial ribosomes in a GTP-dependent manner. In Schizosaccharomyces japonicus (strain yFS275 / FY16936) (Fission yeast), this protein is Translation factor guf1, mitochondrial (guf1).